The sequence spans 218 residues: Cytochrome b6 (218 aa).

The chain crosses the membrane as a helical span at residues 35-55; that stretch reads IFYCLGGITLVCFLIQFATGF. Position 38 (C38) interacts with heme c. Heme b is bound by residues H89 and H103. 3 helical membrane passes run 93 to 113, 119 to 139, and 189 to 209; these read ASMMVLMLILHVFRVYLTGGF, LTWVTGVTMAVITVSFGVTGY, and LHTFVMPWLLAVFMLMHFLMI. Heme b-binding residues include H190 and H205.

This sequence belongs to the cytochrome b family. PetB subfamily. As to quaternary structure, the 4 large subunits of the cytochrome b6-f complex are cytochrome b6, subunit IV (17 kDa polypeptide, PetD), cytochrome f and the Rieske protein, while the 4 small subunits are PetG, PetL, PetM and PetN. The complex functions as a dimer. It depends on heme b as a cofactor. Heme c serves as cofactor.

Its subcellular location is the cellular thylakoid membrane. In terms of biological role, component of the cytochrome b6-f complex, which mediates electron transfer between photosystem II (PSII) and photosystem I (PSI), cyclic electron flow around PSI, and state transitions. The chain is Cytochrome b6 from Parasynechococcus marenigrum (strain WH8102).